A 520-amino-acid polypeptide reads, in one-letter code: Ribonuclease Y (520 aa).

A helical membrane pass occupies residues 4-24 (TVWILISILLATVGAVVGFFV). Residues 210-273 (TVSVVNLPND…ETARIALDKL (64 aa)) enclose the KH domain. Positions 336–429 (VLKHSMEVAY…VAAADALSAA (94 aa)) constitute an HD domain.

Belongs to the RNase Y family.

The protein resides in the cell membrane. Functionally, endoribonuclease that initiates mRNA decay. This is Ribonuclease Y from Bacillus cereus (strain ZK / E33L).